Here is a 43-residue protein sequence, read N- to C-terminus: Gene 67 protein (43 aa).

The protein is Gene 67 protein (67) of Mycobacterium phage L5 (Mycobacteriophage L5).